We begin with the raw amino-acid sequence, 181 residues long: Adenine phosphoribosyltransferase (181 aa).

Belongs to the purine/pyrimidine phosphoribosyltransferase family. Homodimer.

It localises to the cytoplasm. It catalyses the reaction AMP + diphosphate = 5-phospho-alpha-D-ribose 1-diphosphate + adenine. The protein operates within purine metabolism; AMP biosynthesis via salvage pathway; AMP from adenine: step 1/1. Catalyzes a salvage reaction resulting in the formation of AMP, that is energically less costly than de novo synthesis. In Methylobacterium radiotolerans (strain ATCC 27329 / DSM 1819 / JCM 2831 / NBRC 15690 / NCIMB 10815 / 0-1), this protein is Adenine phosphoribosyltransferase.